A 454-amino-acid chain; its full sequence is N-myc 2 proto-oncogene protein (454 aa).

3 disordered regions span residues 133 to 166, 231 to 270, and 326 to 374; these read EKMQ…HSGT, AAPP…EEEE, and SPYV…VRRR. A compositionally biased stretch (acidic residues) spans 256–270; sequence ALSDEVDEEEDEEEE. Residues 363-374 are compositionally biased toward basic and acidic residues; it reads RKSDSEDSVRRR. In terms of domain architecture, bHLH spans 371-423; it reads VRRRNHNILERQRRNDLRSSFTTLRDHVPELVKNEKAAKVVILKKACEYVHYL. A leucine-zipper region spans residues 423 to 444; sequence LQAKEHQLLMEKEKLQARQQQL.

In terms of assembly, efficient DNA binding requires dimerization with another bHLH protein.

Its subcellular location is the nucleus. This chain is N-myc 2 proto-oncogene protein (N-MYC2), found in Otospermophilus beecheyi (California ground squirrel).